A 346-amino-acid chain; its full sequence is tRNA (guanine-N(7)-)-methyltransferase (346 aa).

Residues glycine 101 and 124-125 (EI) each bind S-adenosyl-L-methionine. Positions 149 to 191 (LKSAGGGGSDAAPESPAAPPTPSEAASPDSTTPSEQQAPTTLV) are disordered. Over residues 171-182 (SEAASPDSTTPS) the composition is skewed to low complexity. Residues 204–205 (NT) and cysteine 224 each bind S-adenosyl-L-methionine. Residue aspartate 227 is part of the active site. 318-320 (TEE) serves as a coordination point for S-adenosyl-L-methionine.

It belongs to the class I-like SAM-binding methyltransferase superfamily. TrmB family. As to quaternary structure, forms a complex with trm82.

Its subcellular location is the nucleus. It catalyses the reaction guanosine(46) in tRNA + S-adenosyl-L-methionine = N(7)-methylguanosine(46) in tRNA + S-adenosyl-L-homocysteine. The protein operates within tRNA modification; N(7)-methylguanine-tRNA biosynthesis. Functionally, catalyzes the formation of N(7)-methylguanine at position 46 (m7G46) in tRNA. The protein is tRNA (guanine-N(7)-)-methyltransferase (trm8) of Aspergillus terreus (strain NIH 2624 / FGSC A1156).